Consider the following 116-residue polypeptide: Large ribosomal subunit protein bL17 (116 aa).

The protein belongs to the bacterial ribosomal protein bL17 family. Part of the 50S ribosomal subunit. Contacts protein L32.

The chain is Large ribosomal subunit protein bL17 from Aliarcobacter butzleri (strain RM4018) (Arcobacter butzleri).